Consider the following 298-residue polypeptide: Phosphatidylserine decarboxylase proenzyme (298 aa).

Active-site charge relay system; for autoendoproteolytic cleavage activity residues include Asp-113, His-169, and Ser-256. The Schiff-base intermediate with substrate; via pyruvic acid; for decarboxylase activity role is filled by Ser-256. Pyruvic acid (Ser); by autocatalysis is present on Ser-256.

Belongs to the phosphatidylserine decarboxylase family. PSD-B subfamily. Prokaryotic type II sub-subfamily. As to quaternary structure, heterodimer of a large membrane-associated beta subunit and a small pyruvoyl-containing alpha subunit. Pyruvate is required as a cofactor. Is synthesized initially as an inactive proenzyme. Formation of the active enzyme involves a self-maturation process in which the active site pyruvoyl group is generated from an internal serine residue via an autocatalytic post-translational modification. Two non-identical subunits are generated from the proenzyme in this reaction, and the pyruvate is formed at the N-terminus of the alpha chain, which is derived from the carboxyl end of the proenzyme. The autoendoproteolytic cleavage occurs by a canonical serine protease mechanism, in which the side chain hydroxyl group of the serine supplies its oxygen atom to form the C-terminus of the beta chain, while the remainder of the serine residue undergoes an oxidative deamination to produce ammonia and the pyruvoyl prosthetic group on the alpha chain. During this reaction, the Ser that is part of the protease active site of the proenzyme becomes the pyruvoyl prosthetic group, which constitutes an essential element of the active site of the mature decarboxylase.

Its subcellular location is the cell membrane. The enzyme catalyses a 1,2-diacyl-sn-glycero-3-phospho-L-serine + H(+) = a 1,2-diacyl-sn-glycero-3-phosphoethanolamine + CO2. It functions in the pathway phospholipid metabolism; phosphatidylethanolamine biosynthesis; phosphatidylethanolamine from CDP-diacylglycerol: step 2/2. Catalyzes the formation of phosphatidylethanolamine (PtdEtn) from phosphatidylserine (PtdSer). This is Phosphatidylserine decarboxylase proenzyme from Desulfitobacterium hafniense (strain Y51).